Reading from the N-terminus, the 458-residue chain is Argininosuccinate lyase (458 aa).

The protein belongs to the lyase 1 family. Argininosuccinate lyase subfamily.

Its subcellular location is the cytoplasm. The enzyme catalyses 2-(N(omega)-L-arginino)succinate = fumarate + L-arginine. It functions in the pathway amino-acid biosynthesis; L-arginine biosynthesis; L-arginine from L-ornithine and carbamoyl phosphate: step 3/3. This Neisseria meningitidis serogroup C / serotype 2a (strain ATCC 700532 / DSM 15464 / FAM18) protein is Argininosuccinate lyase.